The sequence spans 378 residues: Alcohol dehydrogenase class-3 (378 aa).

N-acetylalanine is present on Ala-1. Zn(2+) is bound at residue Cys-46. His-47 contacts NAD(+). The an alcohol site is built by Thr-48 and His-68. The Zn(2+) site is built by His-68, Glu-69, Cys-98, Cys-101, Cys-104, Cys-112, and Cys-176. Residues 201–206 (GLGTVG), Asp-225, Lys-230, 294–296 (VGV), 319–321 (TAF), and Arg-371 each bind NAD(+).

Belongs to the zinc-containing alcohol dehydrogenase family. Class-III subfamily. Homodimer. The cofactor is Zn(2+).

Its subcellular location is the cytoplasm. The catalysed reaction is a primary alcohol + NAD(+) = an aldehyde + NADH + H(+). It carries out the reaction a secondary alcohol + NAD(+) = a ketone + NADH + H(+). It catalyses the reaction S-(hydroxymethyl)glutathione + NADP(+) = S-formylglutathione + NADPH + H(+). The enzyme catalyses S-(hydroxymethyl)glutathione + NAD(+) = S-formylglutathione + NADH + H(+). In terms of biological role, class-III ADH is remarkably ineffective in oxidizing ethanol, but it readily catalyzes the oxidation of long-chain primary alcohols and the oxidation of S-(hydroxymethyl) glutathione. In Pisum sativum (Garden pea), this protein is Alcohol dehydrogenase class-3.